The chain runs to 285 residues: RNA polymerase sigma factor RpoH (285 aa).

Positions Leu-53–Arg-122 are sigma-70 factor domain-2. An Interaction with polymerase core subunit RpoC motif is present at residues Asp-77 to Gln-80. The tract at residues Ala-229–Met-281 is sigma-70 factor domain-4. The H-T-H motif DNA-binding region spans Leu-254–Lys-273.

Belongs to the sigma-70 factor family. RpoH subfamily. Interacts with the RNA polymerase core enzyme.

It is found in the cytoplasm. Its function is as follows. Sigma factors are initiation factors that promote the attachment of RNA polymerase to specific initiation sites and are then released. This sigma factor is involved in regulation of expression of heat shock genes. The chain is RNA polymerase sigma factor RpoH from Serratia marcescens.